The primary structure comprises 349 residues: UDP-N-acetylenolpyruvoylglucosamine reductase (349 aa).

One can recognise an FAD-binding PCMH-type domain in the interval 25-197 (GIDARARYAA…VSVTFRLPKR (173 aa)). Residue arginine 173 is part of the active site. Serine 249 serves as the catalytic Proton donor. The active site involves glutamate 345.

This sequence belongs to the MurB family. Requires FAD as cofactor.

It is found in the cytoplasm. The enzyme catalyses UDP-N-acetyl-alpha-D-muramate + NADP(+) = UDP-N-acetyl-3-O-(1-carboxyvinyl)-alpha-D-glucosamine + NADPH + H(+). Its pathway is cell wall biogenesis; peptidoglycan biosynthesis. Functionally, cell wall formation. The protein is UDP-N-acetylenolpyruvoylglucosamine reductase of Burkholderia multivorans (strain ATCC 17616 / 249).